Reading from the N-terminus, the 576-residue chain is Putative SPbeta prophage-derived single-strand DNA-specific exonuclease YorK (576 aa).

Tyrosine 473 is subject to Phosphotyrosine.

Belongs to the RecJ family.

Functionally, putative single-stranded-DNA-specific exonuclease. In Bacillus subtilis (strain 168), this protein is Putative SPbeta prophage-derived single-strand DNA-specific exonuclease YorK (yorK).